The following is a 190-amino-acid chain: Small ribosomal subunit protein uS5 (190 aa).

The S5 DRBM domain occupies 22–85; it reads FVDKLVHINR…DSAKRNLTRV (64 aa).

The protein belongs to the universal ribosomal protein uS5 family. In terms of assembly, part of the 30S ribosomal subunit. Contacts proteins S4 and S8.

In terms of biological role, with S4 and S12 plays an important role in translational accuracy. Located at the back of the 30S subunit body where it stabilizes the conformation of the head with respect to the body. In Bradyrhizobium sp. (strain BTAi1 / ATCC BAA-1182), this protein is Small ribosomal subunit protein uS5.